We begin with the raw amino-acid sequence, 758 residues long: Vitamin K-dependent gamma-carboxylase (758 aa).

Positions 1 to 29 (MAVHRGSARAAPASDKVQKNKPAQTSGLE) are disordered. The residue at position 2 (Ala2) is an N-acetylalanine. Residues 2–60 (AVHRGSARAAPASDKVQKNKPAQTSGLEQGSRMARIFGFEWADLSSWQSVVTLLNRPTD) lie on the Cytoplasmic side of the membrane. Residues 61 to 81 (PANLAVFRFLFAFLMLLDIPQ) traverse the membrane as a helical segment. The Lumenal segment spans residues 82-113 (ERGLSSLDRKYLDGLDVCRFPLLDALRPLPLD). Cys99 and Cys450 are joined by a disulfide. Residues 114–134 (WMYLVYTIMFLGALGMMLGLW) traverse the membrane as a helical segment. At 135-136 (YR) the chain is on the cytoplasmic side. A helical transmembrane segment spans residues 137–157 (LSCMLFLLPYWYVFLLDKTSW). The Lumenal segment spans residues 158 to 292 (NNHSYLYGLL…VSYFHCMNSQ (135 aa)). The chain crosses the membrane as a helical span at residues 293-313 (LFSIGMFPYVMLASSPLFCSA). Over 314-361 (EWPRKLVARCPKRLQELLPAKAAPRPSASCVYKRARAKAGQKPGLRHH) the chain is Cytoplasmic. A helical membrane pass occupies residues 362–382 (LGTVFTLLYLLEQLFLPYSHF). The Lumenal portion of the chain corresponds to 383 to 758 (LTQGYNNWTN…PDSEHVHSEL (376 aa)). The segment at 727–758 (PFEPVDESSASNTDSSDPHPSEPDSEHVHSEL) is disordered. Positions 742 to 758 (SDPHPSEPDSEHVHSEL) are enriched in basic and acidic residues.

This sequence belongs to the vitamin K-dependent gamma-carboxylase family. Monomer. Interacts with CALU.

The protein resides in the endoplasmic reticulum membrane. The enzyme catalyses 4-carboxy-L-glutamyl-[protein] + 2,3-epoxyphylloquinone + H2O + H(+) = phylloquinol + L-glutamyl-[protein] + CO2 + O2. In terms of biological role, mediates the vitamin K-dependent carboxylation of glutamate residues to calcium-binding gamma-carboxyglutamate (Gla) residues with the concomitant conversion of the reduced hydroquinone form of vitamin K to vitamin K epoxide. Catalyzes gamma-carboxylation of various proteins, such as blood coagulation factors (F2, F7, F9 and F10), osteocalcin (BGLAP) or matrix Gla protein (MGP). The protein is Vitamin K-dependent gamma-carboxylase (Ggcx) of Rattus norvegicus (Rat).